We begin with the raw amino-acid sequence, 313 residues long: NADH-ubiquinone oxidoreductase chain 2 (313 aa).

A run of 10 helical transmembrane segments spans residues 3–23 (IWII…FIFW), 47–67 (SMIT…ISSF), 81–101 (INIS…LIMI), 105–125 (LTFY…LLII), 128–148 (FMNS…SIMA), 153–173 (LIKQ…LCLI), 177–197 (MNFW…IIIN), 220–240 (NTMI…GFFM), 253–275 (LIFM…RILT), and 293–313 (KSNF…NIFF).

The protein belongs to the complex I subunit 2 family.

The protein resides in the mitochondrion inner membrane. It carries out the reaction a ubiquinone + NADH + 5 H(+)(in) = a ubiquinol + NAD(+) + 4 H(+)(out). Core subunit of the mitochondrial membrane respiratory chain NADH dehydrogenase (Complex I) that is believed to belong to the minimal assembly required for catalysis. Complex I functions in the transfer of electrons from NADH to the respiratory chain. The immediate electron acceptor for the enzyme is believed to be ubiquinone. The chain is NADH-ubiquinone oxidoreductase chain 2 (ND2) from Rhipicephalus sanguineus (Brown dog tick).